A 713-amino-acid polypeptide reads, in one-letter code: U3 small nucleolar RNA-associated protein 8 (713 aa).

Threonine 95 bears the Phosphothreonine mark. Phosphoserine occurs at positions 148 and 150.

In terms of assembly, interacts with snoRNA U3. Interacts with MPP10 and UTP25. Component of the ribosomal small subunit (SSU) processome composed of at least 40 protein subunits and snoRNA U3. In the absence of snoRNA3, forms a complex with other t-UTPs. This complex can associate with pre-18S ribosomal RNAs.

It is found in the nucleus. It localises to the nucleolus. Functionally, involved in nucleolar processing of pre-18S ribosomal RNA. Also has a role in nuclear tRNA export. It acts between the steps of tRNA maturation/aminoacylation and its subsequent translocation out of the nucleus. Required for optimal pre-ribosomal RNA transcription by RNA polymerase I together with a subset of U3 proteins required for transcription (t-UTPs). This Saccharomyces cerevisiae (strain ATCC 204508 / S288c) (Baker's yeast) protein is U3 small nucleolar RNA-associated protein 8 (UTP8).